Consider the following 85-residue polypeptide: Small ribosomal subunit protein uS17 (85 aa).

This sequence belongs to the universal ribosomal protein uS17 family. Part of the 30S ribosomal subunit.

One of the primary rRNA binding proteins, it binds specifically to the 5'-end of 16S ribosomal RNA. This chain is Small ribosomal subunit protein uS17, found in Agathobacter rectalis (strain ATCC 33656 / DSM 3377 / JCM 17463 / KCTC 5835 / VPI 0990) (Eubacterium rectale).